We begin with the raw amino-acid sequence, 1356 residues long: Vascular endothelial growth factor receptor 2 (1356 aa).

A signal peptide spans 1–19 (MQSKVLLAVALWLCVETRA). Residues 20-764 (ASVGLPSVSL…EGAQEKTNLE (745 aa)) lie on the Extracellular side of the membrane. N-linked (GlcNAc...) asparagine glycosylation is found at Asn46, Asn66, Asn96, Asn143, Asn158, and Asn245. Ig-like C2-type domains are found at residues 46–110 (NTTL…ETDL), 141–207 (NKNK…INDE), 224–320 (YDVV…KNST), 328–414 (PFVA…HVVS), 421–548 (PQIG…FHVT), 551–660 (PEIT…RQLT), and 667–753 (PTIT…AFFI). Cys53 and Cys103 form a disulfide bridge. A disulfide bridge links Cys150 with Cys200. The cysteines at positions 246 and 307 are disulfide-linked. N-linked (GlcNAc...) asparagine glycans are attached at residues Asn318, Asn374, Asn395, Asn511, Asn523, Asn580, Asn613, Asn619, Asn631, Asn675, Asn704, and Asn721. 2 disulfides stabilise this stretch: Cys445–Cys530 and Cys571–Cys642. The cysteines at positions 688 and 737 are disulfide-linked. The helical transmembrane segment at 765 to 785 (IIILVGTAVIAMFFWLLLVII) threads the bilayer. Residues 786–1356 (LRTVKRANGG…SGTTLSSPPV (571 aa)) are Cytoplasmic-facing. A Phosphotyrosine modification is found at Tyr801. The Protein kinase domain occupies 834–1162 (LKLGKPLGRG…FSELVEHLGN (329 aa)). ATP-binding positions include 840–848 (LGRGAFGQV) and Lys868. Tyr951 carries the post-translational modification Phosphotyrosine; by autocatalysis. Phosphoserine occurs at positions 982 and 984. Tyr996 is modified (phosphotyrosine; by autocatalysis). Cys1024 and Cys1045 are oxidised to a cystine. Asp1028 serves as the catalytic Proton acceptor. Phosphotyrosine; by autocatalysis occurs at positions 1054, 1059, 1175, and 1214. Phosphoserine occurs at positions 1231 and 1235. Thr1238 carries the post-translational modification Phosphothreonine. Residues 1274-1318 (DRTKLSPSFGGMVPSKSRESVASEGSNQTSGYQSGYHSDDTDTTV) form a disordered region. Residues 1296-1309 (SEGSNQTSGYQSGY) are compositionally biased toward polar residues. Phosphotyrosine; by autocatalysis occurs at positions 1305, 1309, and 1319.

This sequence belongs to the protein kinase superfamily. Tyr protein kinase family. CSF-1/PDGF receptor subfamily. As to quaternary structure, homodimer in the presence of bound dimeric VEGFA, VEGFC or VEGFD ligands; monomeric in the absence of bound ligands. Can also form heterodimers with FLT1/VEGFR1 and KDR/VEGFR2. Interacts (tyrosine phosphorylated) with LFYN, NCK1, PLCG1. Interacts (tyrosine-phosphorylated active form preferentially) with DAB2IP (via C2 domain and active form preferentially); the interaction occurs at the late phase of VEGFA response and inhibits KDR/VEGFR2 activity. Interacts with SHBSH2D2A/TSAD, GRB2, MYOF, CBL and PDCD6. Interacts (via C-terminus domain) with ERN1 (via kinase domain); the interaction is facilitated in a XBP1 isoform 1- and vascular endothelial growth factor (VEGF)-dependent manner in endothelial cells. Interacts (via juxtamembrane region) with chaperone PDCL3 (via thioredoxin fold region); the interaction leads to increased KDR/VEGFR2 abundance through inhibition of its ubiquitination and degradation. Interacts (tyrosine phosphorylated) with CCDC88A/GIV (via SH2-like region); binding requires autophosphorylation of the KDR/VEGFR2 C-terminal region. Interacts with isoform 2 of BSG. Interacts with SLC31A1; this interaction is induced upon VEGFA stimulation leading to SLC31A1 and KDR subsequent co-internalization to early endosomes, thereby activating KDR downstream signaling in endothelial cells. In terms of assembly, (Microbial infection) Interacts with HIV-1 Tat. Post-translationally, N-glycosylated. In terms of processing, ubiquitinated. Tyrosine phosphorylation of the receptor promotes its poly-ubiquitination, leading to its degradation via the proteasome or lysosomal proteases. Autophosphorylated on tyrosine residues upon ligand binding. Autophosphorylation occurs in trans, i.e. one subunit of the dimeric receptor phosphorylates tyrosine residues on the other subunit. Phosphorylation at Tyr-951 is important for interaction with SH2D2A/TSAD and VEGFA-mediated reorganization of the actin cytoskeleton. Phosphorylation at Tyr-1175 is important for interaction with PLCG1 and SHB. Phosphorylation at Tyr-1214 is important for interaction with NCK1 and FYN. Dephosphorylated by PTPRB. Dephosphorylated by PTPRJ at Tyr-951, Tyr-996, Tyr-1054, Tyr-1059, Tyr-1175 and Tyr-1214. Post-translationally, the inhibitory disulfide bond between Cys-1024 and Cys-1045 may serve as a specific molecular switch for H(2)S-induced modification that regulates KDR/VEGFR2 function. In terms of tissue distribution, detected in cornea (at protein level). Widely expressed.

The protein localises to the cell junction. Its subcellular location is the endoplasmic reticulum. The protein resides in the cell membrane. It is found in the cytoplasm. It localises to the nucleus. The protein localises to the cytoplasmic vesicle. Its subcellular location is the early endosome. The protein resides in the secreted. It carries out the reaction L-tyrosyl-[protein] + ATP = O-phospho-L-tyrosyl-[protein] + ADP + H(+). Its activity is regulated as follows. Present in an inactive conformation in the absence of bound ligand. Binding of VEGFA, VEGFC or VEGFD leads to dimerization and activation by autophosphorylation on tyrosine residues. Inhibited by the small molecule PTK inhibitor SU5614 ((3Z)-5-Chloro-3-[(3,5-dimethyl-1H-pyrrol-2-yl)methylene]-1,3-dihydro-2H-indol-2-one). May be regulated by hydrogen sulfide (H(2)S) levels via a H(2)S-sensitive intracellular disulfide bond. In terms of biological role, tyrosine-protein kinase that acts as a cell-surface receptor for VEGFA, VEGFC and VEGFD. Plays an essential role in the regulation of angiogenesis, vascular development, vascular permeability, and embryonic hematopoiesis. Promotes proliferation, survival, migration and differentiation of endothelial cells. Promotes reorganization of the actin cytoskeleton. Isoforms lacking a transmembrane domain, such as isoform 2 and isoform 3, may function as decoy receptors for VEGFA, VEGFC and/or VEGFD. Isoform 2 plays an important role as negative regulator of VEGFA- and VEGFC-mediated lymphangiogenesis by limiting the amount of free VEGFA and/or VEGFC and preventing their binding to FLT4. Modulates FLT1 and FLT4 signaling by forming heterodimers. Binding of vascular growth factors to isoform 1 leads to the activation of several signaling cascades. Activation of PLCG1 leads to the production of the cellular signaling molecules diacylglycerol and inositol 1,4,5-trisphosphate and the activation of protein kinase C. Mediates activation of MAPK1/ERK2, MAPK3/ERK1 and the MAP kinase signaling pathway, as well as of the AKT1 signaling pathway. Mediates phosphorylation of PIK3R1, the regulatory subunit of phosphatidylinositol 3-kinase, reorganization of the actin cytoskeleton and activation of PTK2/FAK1. Required for VEGFA-mediated induction of NOS2 and NOS3, leading to the production of the signaling molecule nitric oxide (NO) by endothelial cells. Phosphorylates PLCG1. Promotes phosphorylation of FYN, NCK1, NOS3, PIK3R1, PTK2/FAK1 and SRC. The chain is Vascular endothelial growth factor receptor 2 from Homo sapiens (Human).